The chain runs to 247 residues: Probable transcriptional regulatory protein ABO_0750 (247 aa).

This sequence belongs to the TACO1 family.

It localises to the cytoplasm. This Alcanivorax borkumensis (strain ATCC 700651 / DSM 11573 / NCIMB 13689 / SK2) protein is Probable transcriptional regulatory protein ABO_0750.